The primary structure comprises 498 residues: Angiopoietin-1 (498 aa).

Residues 1-19 (MTVFLSFAFLAAILTHIGC) form the signal peptide. N92, N122, N154, N243, and N295 each carry an N-linked (GlcNAc...) asparagine glycan. Positions 158–254 (RLEIQLLENS…SVLQKQQLEL (97 aa)) form a coiled coil. In terms of domain architecture, Fibrinogen C-terminal spans 277–497 (KEEVKPFRDC…STTMMIRPLD (221 aa)). Cystine bridges form between C286–C315 and C439–C452.

In terms of assembly, homooligomer. Interacts with TEK/TIE2. Interacts with SVEP1/polydom. Interacts with THBD; this interaction significantly inhibits the generation of activated PC and TAFIa/CPB2 by the thrombin/thrombomodulin complex.

It is found in the secreted. Its function is as follows. Binds and activates TIE2 receptor by inducing its tyrosine phosphorylation. Implicated in endothelial developmental processes later and distinct from that of VEGF. Appears to play a crucial role in mediating reciprocal interactions between the endothelium and surrounding matrix and mesenchyme. Mediates blood vessel maturation/stability. It may play an important role in the heart early development. This is Angiopoietin-1 (ANGPT1) from Sus scrofa (Pig).